The chain runs to 474 residues: MSQDFDYDLVIIGAGVGGHGAALHAVKCGLKTAIIEAKDMGGTCVNRGCIPSKALLAASGRVREMSDQDHLQQLGIQINGVTFTREAIAAHANDLVSKIQSDLTNSLTRLKVDTIRGWGKVSGPQEVTVIGDNETRILKAKEIMLCPGSVPFVPPGIEIDHKTVFTSDEAVKLETLPQWIAIIGSGYIGLEFSDVYTALGCEVTMIEALPDLMPGFDPEIAKIAERVLIKSRDIETYTGVFATKIKAGSPVEIELTDAKTKEVIDTLEVDACLVATGRIPATKNLGLETVGVETDRRGFIEVNDQMQVIKDGKPVPHLWAVGDATGKMMLAHAASGQGVVAVENICGRKTEVDYRAIPAAAFTHPEISYVGLTEAQAKELGEKEGFVVSTAKTYFKGNSKALAEKETDGIAKVVYRQDTGELLGAHIIGIHASDLIQEAAQAIADRKSVRELAFHVHAHPTLSEVLDEAYKRAV.

FAD contacts are provided by residues 36-44 (EAKDMGGTC), Lys-53, and Gly-119. Cys-44 and Cys-49 form a disulfide bridge. Residues 184–188 (GSGYI), Glu-207, and 275–278 (ATGR) each bind NAD(+). Residues Asp-323 and Ala-331 each contribute to the FAD site. Residue His-459 is the Proton acceptor of the active site.

This sequence belongs to the class-I pyridine nucleotide-disulfide oxidoreductase family. Homodimer. It depends on FAD as a cofactor.

The protein resides in the cell inner membrane. The catalysed reaction is N(6)-[(R)-dihydrolipoyl]-L-lysyl-[protein] + NAD(+) = N(6)-[(R)-lipoyl]-L-lysyl-[protein] + NADH + H(+). In terms of biological role, lipoamide dehydrogenase is a component of the alpha-ketoacid dehydrogenase complexes. This Synechocystis sp. (strain ATCC 27184 / PCC 6803 / Kazusa) protein is Dihydrolipoyl dehydrogenase (lpdA).